The chain runs to 2493 residues: Adenylate cyclase (2493 aa).

Composition is skewed to polar residues over residues 1-18 (MLFT…SPEQ), 42-51 (RDSNGSSNFT), 60-78 (SQQY…QPDI), 129-147 (PANS…SISP), and 197-210 (APFS…TSVN). 9 disordered regions span residues 1-85 (MLFT…SSTL), 99-148 (FEHA…ISPS), 197-325 (APFS…SSLS), 355-444 (NSPS…QSQS), 475-565 (GSIT…VNML), 616-660 (QAPV…KTSY), 753-832 (NVGE…GSKS), 854-882 (ALVQ…GAGA), and 904-967 (RPSK…ATGT). Positions 211–233 (PSAASTASPSTSAATRTRPRGGT) are enriched in low complexity. 2 stretches are compositionally biased toward polar residues: residues 234-246 (NASQ…TSFG) and 253-264 (LSSSRSQYSLRP). Composition is skewed to basic residues over residues 287-303 (AVKK…KKSS) and 404-422 (HLKK…HLAK). Residues 425 to 434 (KPGEDADSAR) show a composition bias toward basic and acidic residues. Polar residues predominate over residues 500–525 (PSPSQTPIAERQTSVTSTVESPSHAS). The segment covering 534–555 (SLRTPSRTTASTSTSSASTVLS) has biased composition (low complexity). Basic and acidic residues predominate over residues 630 to 640 (TDSELSDRKDS). Residues 641–660 (VVSTHSMRSNHSGISPKTSY) are compositionally biased toward polar residues. Residues 754–763 (VGEEEDDDDD) show a composition bias toward acidic residues. Composition is skewed to low complexity over residues 780–791 (SSSGISSTHASS) and 854–870 (ALVQ…QPSP). Residues 913–935 (RPNTAGSVGATRPSTTTLGSTLS) are compositionally biased toward polar residues. A Ras-associating domain is found at 970-1072 (RNHFIRVYKT…LRFVFRPDSV (103 aa)). 22 LRR repeats span residues 1086–1107 (TFQH…LYKH), 1110–1132 (WIVS…VQLC), 1134–1155 (SLRT…VRHS), 1157–1178 (TLTH…SLDL), 1181–1202 (ELMS…FSSI), 1204–1225 (TLRN…ICDV), 1227–1248 (SLVD…IANL), 1250–1271 (NLER…MSEL), 1273–1294 (SLRT…LGLP), 1295–1316 (RLQN…LGPQ), 1317–1336 (LTQV…AALT), 1339–1360 (DLTS…LFPQ), 1363–1385 (ALVK…GDLK), 1386–1407 (RLEM…IGDL), 1409–1430 (ALKE…LWLC), 1432–1453 (SLAH…PDIR), 1511–1534 (SLQK…SELT), 1535–1556 (SLEV…SLQT), 1559–1580 (KLRE…DLVV), 1583–1605 (ELRI…GKLK), 1606–1628 (KLAN…HYDW), and 1635–1654 (ELRY…TKLS). Residues 1710–2000 (AYGIADALGK…ESIMVMVISV (291 aa)) enclose the PPM-type phosphatase domain. Positions 2058–2194 (ALVFTDIKNS…PMVNRAARIS (137 aa)) constitute a Guanylate cyclase domain. Residues Asp2063 and Asp2105 each contribute to the Mg(2+) site. 3 disordered regions span residues 2220–2241 (DESS…TEEE), 2354–2378 (EADR…HGTA), and 2467–2493 (PPRA…ELVP). Polar residues predominate over residues 2470-2485 (ASTSALSLPSPRTSPR).

The protein belongs to the adenylyl cyclase class-3 family. It depends on Mg(2+) as a cofactor.

It catalyses the reaction ATP = 3',5'-cyclic AMP + diphosphate. Its function is as follows. Plays essential roles in regulation of cellular metabolism by catalyzing the synthesis of a second messenger, cAMP. This is Adenylate cyclase (UAC1) from Mycosarcoma maydis (Corn smut fungus).